Consider the following 878-residue polypeptide: Alanine--tRNA ligase (878 aa).

4 residues coordinate Zn(2+): histidine 571, histidine 575, cysteine 673, and histidine 677.

This sequence belongs to the class-II aminoacyl-tRNA synthetase family. It depends on Zn(2+) as a cofactor.

It is found in the cytoplasm. It carries out the reaction tRNA(Ala) + L-alanine + ATP = L-alanyl-tRNA(Ala) + AMP + diphosphate. Catalyzes the attachment of alanine to tRNA(Ala) in a two-step reaction: alanine is first activated by ATP to form Ala-AMP and then transferred to the acceptor end of tRNA(Ala). Also edits incorrectly charged Ser-tRNA(Ala) and Gly-tRNA(Ala) via its editing domain. The protein is Alanine--tRNA ligase of Syntrophus aciditrophicus (strain SB).